A 945-amino-acid polypeptide reads, in one-letter code: Collagen-like protein 1 (945 aa).

Disordered regions lie at residues 80–226 and 257–441; these read SLKG…SPDL and GEKG…DKGE. 2 Collagen-like domains span residues 83–142 and 146–205; these read GDPG…QGDK and GDVG…KGDK. Basic and acidic residues-rich tracts occupy residues 109-145 and 168-208; these read QGTK…KGDQ and DQGD…KGDK. N211 carries N-linked (GlcNAc...) asparagine; by host glycosylation. 5 consecutive Collagen-like domains span residues 257 to 376, 383 to 442, 488 to 547, 554 to 613, and 635 to 694; these read GEKG…KGDK, GDKG…KGEN, GEKG…VGDK, GDKG…KGDV, and GDKG…VGAS. An N-linked (GlcNAc...) asparagine; by host glycan is attached at N442. Residues 488–687 are compositionally biased toward basic and acidic residues; it reads GEKGDKGDTG…DKGDKGDKGD (200 aa). The tract at residues 488–712 is disordered; it reads GEKGDKGDTG…SPTTGENGDS (225 aa). Positions 703–712 are enriched in polar residues; the sequence is SPTTGENGDS. N716 carries N-linked (GlcNAc...) asparagine; by host glycosylation. The disordered stretch occupies residues 733–768; it reads TNIKGDKGDKGDKGDKGDKGDTGDVGLKGDTGTPGS. Positions 736 to 754 are enriched in basic and acidic residues; that stretch reads KGDKGDKGDKGDKGDKGDT. The segment covering 756–765 has biased composition (low complexity); sequence DVGLKGDTGT.

May be hydroxylated on lysine by the viral-encoded procollagen-lysine,2-oxoglutarate 5-dioxygenase.

The protein resides in the virion. Its function is as follows. May participate in the formation of a layer of cross-linked glycosylated fibrils at the viral surface thus giving it a hairy-like appearance. The sequence is that of Collagen-like protein 1 from Acanthamoeba polyphaga mimivirus (APMV).